The following is a 280-amino-acid chain: Mediator of RNA polymerase II transcription subunit 2 (280 aa).

The segment at 212 to 247 is disordered; the sequence is GLQNTSGGNEKKNDPQINFNDTNAPPSAVNVPENGN. Over residues 226–236 the composition is skewed to polar residues; sequence PQINFNDTNAP.

This sequence belongs to the Mediator complex subunit 2 family. Component of the Mediator complex.

It is found in the nucleus. Its function is as follows. Component of the Mediator complex, a coactivator involved in the regulated transcription of nearly all RNA polymerase II-dependent genes. Mediator functions as a bridge to convey information from gene-specific regulatory proteins to the basal RNA polymerase II transcription machinery. Mediator is recruited to promoters by direct interactions with regulatory proteins and serves as a scaffold for the assembly of a functional preinitiation complex with RNA polymerase II and the general transcription factors. In Kluyveromyces lactis (strain ATCC 8585 / CBS 2359 / DSM 70799 / NBRC 1267 / NRRL Y-1140 / WM37) (Yeast), this protein is Mediator of RNA polymerase II transcription subunit 2 (MED2).